Consider the following 263-residue polypeptide: Putative S-adenosyl-L-methionine-dependent methyltransferase Mjls_0079 (263 aa).

Residues aspartate 121 and 150–151 each bind S-adenosyl-L-methionine; that span reads ES.

Belongs to the UPF0677 family.

Functionally, exhibits S-adenosyl-L-methionine-dependent methyltransferase activity. The chain is Putative S-adenosyl-L-methionine-dependent methyltransferase Mjls_0079 from Mycobacterium sp. (strain JLS).